Consider the following 255-residue polypeptide: uncharacterized protein (255 aa).

The N-terminal stretch at 1 to 23 is a signal peptide; it reads MKRLNKLVLGISFLFLVISITAG. The N-palmitoyl cysteine moiety is linked to residue Cys24. Cys24 carries S-diacylglycerol cysteine lipidation.

The protein belongs to the staphylococcal tandem lipoprotein family.

The protein resides in the cell membrane. This is an uncharacterized protein from Staphylococcus aureus (strain N315).